The chain runs to 77 residues: UPF0346 protein LMOf2365_1885 (77 aa).

Belongs to the UPF0346 family.

This chain is UPF0346 protein LMOf2365_1885, found in Listeria monocytogenes serotype 4b (strain F2365).